The chain runs to 333 residues: 4-hydroxythreonine-4-phosphate dehydrogenase (333 aa).

Histidine 136 and threonine 137 together coordinate substrate. 3 residues coordinate a divalent metal cation: histidine 166, histidine 211, and histidine 266. The substrate site is built by lysine 274, asparagine 283, and arginine 292.

The protein belongs to the PdxA family. As to quaternary structure, homodimer. It depends on Zn(2+) as a cofactor. Mg(2+) is required as a cofactor. The cofactor is Co(2+).

Its subcellular location is the cytoplasm. It catalyses the reaction 4-(phosphooxy)-L-threonine + NAD(+) = 3-amino-2-oxopropyl phosphate + CO2 + NADH. It functions in the pathway cofactor biosynthesis; pyridoxine 5'-phosphate biosynthesis; pyridoxine 5'-phosphate from D-erythrose 4-phosphate: step 4/5. Its function is as follows. Catalyzes the NAD(P)-dependent oxidation of 4-(phosphooxy)-L-threonine (HTP) into 2-amino-3-oxo-4-(phosphooxy)butyric acid which spontaneously decarboxylates to form 3-amino-2-oxopropyl phosphate (AHAP). This is 4-hydroxythreonine-4-phosphate dehydrogenase from Acidithiobacillus ferrooxidans (strain ATCC 23270 / DSM 14882 / CIP 104768 / NCIMB 8455) (Ferrobacillus ferrooxidans (strain ATCC 23270)).